The chain runs to 184 residues: Transcription termination/antitermination protein NusG (184 aa).

The region spanning 133–163 (EGDQVRVVSGPFADFTGTVTEINPERGKVKV) is the KOW domain.

It belongs to the NusG family.

Its function is as follows. Participates in transcription elongation, termination and antitermination. This chain is Transcription termination/antitermination protein NusG, found in Thermus thermophilus (strain ATCC 27634 / DSM 579 / HB8).